The primary structure comprises 72 residues: N-alpha-acetyltransferase 38, NatC auxiliary subunit (72 aa).

The Sm domain maps to 3 to 72 (NGEILLTSWL…KHIKSFSVRA (70 aa)).

Component of the N-terminal acetyltransferase C (NatC) complex, composed of the catalytic subunit Naa30, a large auxiliary subunit Naa35 and a small auxiliary subunit Naa38.

Its subcellular location is the endoplasmic reticulum. In terms of biological role, component of the NatC N-terminal acetyltransferase, which associates with the ribosome to acetylate nascent protein chains in a cotranslational manner. NatC acetylates protein N-termini starting with methionine, followed by a hydrophobic or amphipathic amino acid, with amino acids at positions 3 and 4 also contributing to NatC recognition. The first 4 amino acids of cognate substrates are recognized at the Naa30-Naa35 interface. NatC-dependent acetylation targets various substrate proteins to specific subcellular sites. The protein is N-alpha-acetyltransferase 38, NatC auxiliary subunit (naa38) of Schizosaccharomyces pombe (strain 972 / ATCC 24843) (Fission yeast).